Reading from the N-terminus, the 296-residue chain is Urease accessory protein UreD (296 aa).

Belongs to the UreD family. In terms of assembly, ureD, UreF and UreG form a complex that acts as a GTP-hydrolysis-dependent molecular chaperone, activating the urease apoprotein by helping to assemble the nickel containing metallocenter of UreC. The UreE protein probably delivers the nickel.

It localises to the cytoplasm. Its function is as follows. Required for maturation of urease via the functional incorporation of the urease nickel metallocenter. This Methylibium petroleiphilum (strain ATCC BAA-1232 / LMG 22953 / PM1) protein is Urease accessory protein UreD.